The chain runs to 500 residues: UBX domain-containing protein 5 (500 aa).

Positions 50–61 are enriched in low complexity; that stretch reads SNNTPTPSNSTP. Residues 50 to 70 are disordered; it reads SNNTPTPSNSTPMAPTSVDSD. Position 139 is a phosphoserine (serine 139). 2 disordered regions span residues 142–169 and 371–399; these read NQRLDDTNTNTYINDNSSDSLDSEEEND and ESLNNNSSKSNQEEVPSTGEEQKRVQEPD. Residues 148-161 show a composition bias toward low complexity; it reads TNTNTYINDNSSDS. A UBX domain is found at 415–493; it reads KPGITTRIQI…GLKNSSLLLE (79 aa).

Interacts with CDC48.

Its subcellular location is the nucleus. It localises to the cytoplasm. Involved in CDC48-dependent protein degradation through the ubiquitin/proteasome pathway. In Saccharomyces cerevisiae (strain ATCC 204508 / S288c) (Baker's yeast), this protein is UBX domain-containing protein 5 (UBX5).